The chain runs to 223 residues: MSQNDLNKEKALVVFSGGQDSTTCLFYAKKHFKEVELVTFNYGQRHDKEIEVAKKIAKEQNLKHHILDMSLLSQLTPNALTQHELSIEDNDDGIPNTFVPARNLLFLSFAGALAYQIHAKHIITGVCETDFSGYPDCRDSFIKSMNVTLSLSMDKDFVIHTPLMWLDKAQTWALSDKLGVLDYIRHNTLTCYNGIIGDGCGECPACHLRARGLKHYLEHKGEE.

Position 15–25 (Phe15–Leu25) interacts with ATP. Residues Cys191, Cys200, Cys203, and Cys206 each coordinate Zn(2+).

It belongs to the QueC family. As to quaternary structure, homodimer. Zn(2+) serves as cofactor.

The catalysed reaction is 7-carboxy-7-deazaguanine + NH4(+) + ATP = 7-cyano-7-deazaguanine + ADP + phosphate + H2O + H(+). Its pathway is purine metabolism; 7-cyano-7-deazaguanine biosynthesis. Its function is as follows. Catalyzes the ATP-dependent conversion of 7-carboxy-7-deazaguanine (CDG) to 7-cyano-7-deazaguanine (preQ(0)). This chain is 7-cyano-7-deazaguanine synthase, found in Staphylococcus epidermidis (strain ATCC 35984 / DSM 28319 / BCRC 17069 / CCUG 31568 / BM 3577 / RP62A).